The sequence spans 426 residues: Vitamin D3 receptor (426 aa).

The segment at residues 21–96 (PRICGVCGDR…IGMMKEFILT (76 aa)) is a DNA-binding region (nuclear receptor). Zn(2+) contacts are provided by Cys-24, Cys-27, Cys-41, Cys-44, Cys-60, Cys-66, Cys-76, and Cys-79. 2 consecutive NR C4-type zinc fingers follow at residues 24–44 (CGVCGDRATGFHFNAMTCEGC) and 60–84 (CPFNGDCRITKDNRRHCQACRLKRC). The tract at residues 97-126 (DEEVQRKREMILKRKEEEALKDSLRPKLSE) is hinge. An NR LBD domain is found at 127–422 (EQQRIITTLL…LTPLLFEVFG (296 aa)). Tyr-143 is a binding site for calcitriol. A disordered region spans residues 147–215 (YSDFSQFRPP…NEEDSDDPSV (69 aa)). The segment covering 175 to 191 (SFSGNSSSSCSDHCTSS) has biased composition (low complexity). The span at 192 to 204 (PDTMEPTSFSNQD) shows a compositional bias: polar residues. Ser-235 is a binding site for calcitriol. Residues 244–262 (KMIPGFRDLTPEDQIVLLK) form an interaction with coactivator LXXLL motif region. 4 residues coordinate calcitriol: Arg-272, Ser-276, His-304, and His-396. Residues 415–423 (PLLFEVFGN) carry the 9aaTAD motif.

Belongs to the nuclear hormone receptor family. NR1 subfamily. Homodimer in the absence of bound vitamin D3. Heterodimer with RXRA after vitamin D3 binding. Interacts with MED1, NCOA1, NCOA2, NCOA3 and NCOA6 coactivators, leading to a strong increase of transcription of target genes. Interacts with the corepressor NCOR1. Interacts with SNW1. Interacts with IRX4, the interaction does not affect its transactivation activity. Interacts with CRY1. Interacts with CRY2 in a ligand-dependent manner. Post-translationally, ubiquitinated by UBR5, leading to its degradation: UBR5 specifically recognizes and binds ligand-bound VDR when it is not associated with coactivators (NCOAs). In presence of NCOAs, the UBR5-degron is not accessible, preventing its ubiquitination and degradation. Mammary gland, expression increases during lactation. Also found in colon, expression is down-regulated at parturition.

It is found in the nucleus. Its subcellular location is the cytoplasm. Functionally, nuclear receptor for calcitriol, the active form of vitamin D3 which mediates the action of this vitamin on cells. Enters the nucleus upon vitamin D3 binding where it forms heterodimers with the retinoid X receptor/RXR. The VDR-RXR heterodimers bind to specific response elements on DNA and activate the transcription of vitamin D3-responsive target genes. Plays a central role in calcium homeostasis. Also functions as a receptor for the secondary bile acid lithocholic acid (LCA) and its metabolites. The chain is Vitamin D3 receptor (VDR) from Bos taurus (Bovine).